Reading from the N-terminus, the 107-residue chain is UPF0045 protein in glkA 3'region (107 aa).

The protein belongs to the UPF0045 family.

This is UPF0045 protein in glkA 3'region (dglA) from Staphylococcus xylosus.